A 129-amino-acid polypeptide reads, in one-letter code: uncharacterized protein (129 aa).

The next 3 helical transmembrane spans lie at 22–42 (LASS…FFFF), 55–75 (VGSF…FFFF), and 88–108 (LPFT…FFFF).

Its subcellular location is the membrane. This is an uncharacterized protein from Saccharomyces cerevisiae (strain ATCC 204508 / S288c) (Baker's yeast).